Reading from the N-terminus, the 751-residue chain is Polyadenylate-binding protein, cytoplasmic and nuclear (751 aa).

Polar residues-rich tracts occupy residues 1-26 (MSAE…NPAA) and 36-50 (ESAS…NQPH). Residues 1 to 50 (MSAEVSTTPAADNTVNGTPEATNPAATSAPEVTAVESASPSATPSANQPH) are disordered. RRM domains lie at 52-130 (ASLY…WSQR), 140-217 (GNVF…HHIS), 233-310 (TNVY…RAQK), and 336-458 (VNLY…LAQR). Disordered stretches follow at residues 371 to 413 (TVTA…KKTE) and 601 to 643 (GQGM…REEV). The span at 379 to 413 (ESEKEKESNKENEKEGEEKTEEKPKESEEEAKKTE) shows a compositional bias: basic and acidic residues. Over residues 603-629 (GMRGPGYGQGRGGAPVQGGPRPQGGRG) the composition is skewed to gly residues. The region spanning 646–723 (TGGLTAQTLN…ALSVYDEYMK (78 aa)) is the PABC domain. The segment at 725 to 751 (KGEGEAPAEPAKPKEDAAETATEENKS) is disordered. The span at 735–751 (AKPKEDAAETATEENKS) shows a compositional bias: basic and acidic residues.

It belongs to the polyadenylate-binding protein type-1 family.

The protein resides in the cytoplasm. It localises to the nucleus. In terms of biological role, binds the poly(A) tail of mRNA. Appears to be an important mediator of the multiple roles of the poly(A) tail in mRNA biogenesis, stability and translation. In the nucleus, involved in both mRNA cleavage and polyadenylation. Is also required for efficient mRNA export to the cytoplasm. Acts in concert with a poly(A)-specific nuclease (PAN) to affect poly(A) tail shortening, which may occur concomitantly with either nucleocytoplasmic mRNA transport or translational initiation. In the cytoplasm, stimulates translation initiation and regulates mRNA decay through translation termination-coupled poly(A) shortening, probably mediated by PAN. This Neosartorya fischeri (strain ATCC 1020 / DSM 3700 / CBS 544.65 / FGSC A1164 / JCM 1740 / NRRL 181 / WB 181) (Aspergillus fischerianus) protein is Polyadenylate-binding protein, cytoplasmic and nuclear (pab1).